A 398-amino-acid polypeptide reads, in one-letter code: CCA-adding enzyme (398 aa).

Residues glycine 32 and arginine 35 each contribute to the ATP site. CTP contacts are provided by glycine 32 and arginine 35. Positions 45 and 47 each coordinate Mg(2+). Residues arginine 116, aspartate 159, arginine 162, arginine 165, and arginine 168 each coordinate ATP. Arginine 116, aspartate 159, arginine 162, arginine 165, and arginine 168 together coordinate CTP.

It belongs to the tRNA nucleotidyltransferase/poly(A) polymerase family. Bacterial CCA-adding enzyme type 3 subfamily. Homodimer. The cofactor is Mg(2+).

It catalyses the reaction a tRNA precursor + 2 CTP + ATP = a tRNA with a 3' CCA end + 3 diphosphate. It carries out the reaction a tRNA with a 3' CCA end + 2 CTP + ATP = a tRNA with a 3' CCACCA end + 3 diphosphate. Catalyzes the addition and repair of the essential 3'-terminal CCA sequence in tRNAs without using a nucleic acid template. Adds these three nucleotides in the order of C, C, and A to the tRNA nucleotide-73, using CTP and ATP as substrates and producing inorganic pyrophosphate. tRNA 3'-terminal CCA addition is required both for tRNA processing and repair. Also involved in tRNA surveillance by mediating tandem CCA addition to generate a CCACCA at the 3' terminus of unstable tRNAs. While stable tRNAs receive only 3'-terminal CCA, unstable tRNAs are marked with CCACCA and rapidly degraded. This Lactobacillus gasseri (strain ATCC 33323 / DSM 20243 / BCRC 14619 / CIP 102991 / JCM 1131 / KCTC 3163 / NCIMB 11718 / NCTC 13722 / AM63) protein is CCA-adding enzyme.